A 476-amino-acid polypeptide reads, in one-letter code: 2-(3-amino-3-carboxypropyl)histidine synthase subunit 2 (476 aa).

Residues 1–15 show a composition bias toward polar residues; sequence MTESAPSAFFTTSTP. The segment at 1–24 is disordered; the sequence is MTESAPSAFFTTSTPADHVHEEES. Residues Cys-102, Cys-123, and Cys-347 each coordinate [4Fe-4S] cluster. The disordered stretch occupies residues 451-476; the sequence is DGVSTAEDSTKMGEGRSGIAQGYSGK.

Belongs to the DPH1/DPH2 family. DPH2 subfamily. In terms of assembly, component of the 2-(3-amino-3-carboxypropyl)histidine synthase complex composed of dph-1, dph-2, dph-3 and a NADH-dependent reductase. Requires [4Fe-4S] cluster as cofactor.

Its pathway is protein modification; peptidyl-diphthamide biosynthesis. Required for the first step of diphthamide biosynthesis, a post-translational modification of histidine which occurs in elongation factor 2. Dph-1 and dph-2 transfer a 3-amino-3-carboxypropyl (ACP) group from S-adenosyl-L-methionine (SAM) to a histidine residue, the reaction is assisted by a reduction system comprising dph-3 and a NADH-dependent reductase. Facilitates the reduction of the catalytic iron-sulfur cluster found in the dph-1 subunit. In Caenorhabditis elegans, this protein is 2-(3-amino-3-carboxypropyl)histidine synthase subunit 2 (dph-2).